We begin with the raw amino-acid sequence, 332 residues long: Biotin synthase (332 aa).

The Radical SAM core domain occupies 53–282 (HFGKKVKLNM…TKEIRISGGR (230 aa)). 3 residues coordinate [4Fe-4S] cluster: Cys71, Cys75, and Cys78. [2Fe-2S] cluster contacts are provided by Cys115, Cys147, Cys207, and Arg277.

The protein belongs to the radical SAM superfamily. Biotin synthase family. As to quaternary structure, homodimer. It depends on [4Fe-4S] cluster as a cofactor. Requires [2Fe-2S] cluster as cofactor.

The catalysed reaction is (4R,5S)-dethiobiotin + (sulfur carrier)-SH + 2 reduced [2Fe-2S]-[ferredoxin] + 2 S-adenosyl-L-methionine = (sulfur carrier)-H + biotin + 2 5'-deoxyadenosine + 2 L-methionine + 2 oxidized [2Fe-2S]-[ferredoxin]. Its pathway is cofactor biosynthesis; biotin biosynthesis; biotin from 7,8-diaminononanoate: step 2/2. Its function is as follows. Catalyzes the conversion of dethiobiotin (DTB) to biotin by the insertion of a sulfur atom into dethiobiotin via a radical-based mechanism. The polypeptide is Biotin synthase (Bacillus cereus (strain ATCC 10987 / NRS 248)).